The primary structure comprises 286 residues: Formamidopyrimidine-DNA glycosylase (286 aa).

Pro-2 functions as the Schiff-base intermediate with DNA in the catalytic mechanism. The active-site Proton donor is the Glu-3. Catalysis depends on Lys-61, which acts as the Proton donor; for beta-elimination activity. His-96, Arg-115, and Lys-161 together coordinate DNA. The FPG-type zinc finger occupies 247 to 281; that stretch reads EAYGREGEPCRRCGRAMRREAFMNRSSYFCPSCQR. The active-site Proton donor; for delta-elimination activity is the Arg-271.

This sequence belongs to the FPG family. As to quaternary structure, monomer. Zn(2+) is required as a cofactor.

The catalysed reaction is Hydrolysis of DNA containing ring-opened 7-methylguanine residues, releasing 2,6-diamino-4-hydroxy-5-(N-methyl)formamidopyrimidine.. The enzyme catalyses 2'-deoxyribonucleotide-(2'-deoxyribose 5'-phosphate)-2'-deoxyribonucleotide-DNA = a 3'-end 2'-deoxyribonucleotide-(2,3-dehydro-2,3-deoxyribose 5'-phosphate)-DNA + a 5'-end 5'-phospho-2'-deoxyribonucleoside-DNA + H(+). Involved in base excision repair of DNA damaged by oxidation or by mutagenic agents. Acts as a DNA glycosylase that recognizes and removes damaged bases. Has a preference for oxidized purines, such as 7,8-dihydro-8-oxoguanine (8-oxoG). Has AP (apurinic/apyrimidinic) lyase activity and introduces nicks in the DNA strand. Cleaves the DNA backbone by beta-delta elimination to generate a single-strand break at the site of the removed base with both 3'- and 5'-phosphates. In Mycobacteroides abscessus (strain ATCC 19977 / DSM 44196 / CCUG 20993 / CIP 104536 / JCM 13569 / NCTC 13031 / TMC 1543 / L948) (Mycobacterium abscessus), this protein is Formamidopyrimidine-DNA glycosylase.